Reading from the N-terminus, the 62-residue chain is Small ribosomal subunit protein eS27 (62 aa).

Positions 17, 20, 36, and 39 each coordinate Zn(2+). The C4-type zinc-finger motif lies at 17–39 (CPDCDNEQTVFSKASTTVKCVVC).

The protein belongs to the eukaryotic ribosomal protein eS27 family. In terms of assembly, part of the 30S ribosomal subunit. The cofactor is Zn(2+).

This chain is Small ribosomal subunit protein eS27, found in Methanoregula boonei (strain DSM 21154 / JCM 14090 / 6A8).